A 122-amino-acid chain; its full sequence is Iron-sulfur cluster insertion protein ErpA (122 aa).

The iron-sulfur cluster site is built by Cys50, Cys114, and Cys116.

It belongs to the HesB/IscA family. In terms of assembly, homodimer. Iron-sulfur cluster serves as cofactor.

Its function is as follows. Required for insertion of 4Fe-4S clusters for at least IspG. This Alkalilimnicola ehrlichii (strain ATCC BAA-1101 / DSM 17681 / MLHE-1) protein is Iron-sulfur cluster insertion protein ErpA.